Reading from the N-terminus, the 469-residue chain is MVVDGKTTRLRASCNACNESKVRCSQRKPTCARCERNGVECIYGLSRRTHKDAPPISMPPSQRSHNHPRGASRSSSSGGDTKANSNSSSNWHMSPNVPFMIPPQQQQQQQKDEAAAAAAATPRFQCMYTPQDATADTVNRAGLLLDMDFSSLVTGSSSPLTSVDPLSAAVTRFPTPGAEHTNPWALGPFFGGNTNNNSINNPDWTRQPTTMGPMITVPTTAPPSPSPSCTECSCHAGVTELLSSMRGGGDDRRLSLDAQLAKLKRCIVSSETSMGCAHGRDDAEPIHILAVSTLIGYVIDEFEMLASESPLRLSSSLADMSGSRNAERVAESILSSGSDESMSMSSMAATTGVNNMSMSMSMGNLLEPRLSWGVLELEDDDEVDLRQRLYLLSFRKLERLLSQLTIYLRNLHDARAGLPEPSRHMAFVMACDYTRLWLEKKAEDVKRMFLVARPAGDETMDPALMFTAH.

The zn(2)-C6 fungal-type DNA-binding region spans 14-41; sequence CNACNESKVRCSQRKPTCARCERNGVEC. Residues 49 to 118 form a disordered region; it reads THKDAPPISM…QQKDEAAAAA (70 aa). Over residues 82 to 93 the composition is skewed to polar residues; sequence KANSNSSSNWHM. A compositionally biased stretch (low complexity) spans 104-118; sequence QQQQQQQKDEAAAAA.

Its subcellular location is the nucleus. Its function is as follows. Transcription factor; part of the gene cluster that mediates the biosynthesis of the phomopsins, a group of hexapeptide mycotoxins which infects lupins and causes lupinosis disease in livestock. May play a role in the regulation of the production of phomopsins. The sequence is that of Transcription factor phomD' from Diaporthe leptostromiformis (Lupinosis disease fungus).